We begin with the raw amino-acid sequence, 253 residues long: MSGHSKWATTKHKKAVVDAKRAKSFARLIKNIEVAARTGGGDVSGNPTLFDAIQKAKKTSVPADNIDRAVKRGSGAEAGGADWQTIMYEGYGPNGVALLVECLTDNKNRAAMEVRTAMTRNGGSLADPGSVAYMFSRKGVVVIGKEGTDLTEDDVLGAVLDAGAEEVSDQGDTFEVISEATDLAAVRDALKAAGIEYDSAEASFVPSVEVPLDAEGATKVFRLIDALDDCDDVQNVFANYDVSDDVMAALEDA.

The protein belongs to the TACO1 family.

Its subcellular location is the cytoplasm. The protein is Probable transcriptional regulatory protein Krad_3057 of Kineococcus radiotolerans (strain ATCC BAA-149 / DSM 14245 / SRS30216).